A 596-amino-acid polypeptide reads, in one-letter code: Elongation factor 4 (596 aa).

A tr-type G domain is found at 2 to 184 (DHIRNFSIIA…AVVARIPPPK (183 aa)). Residues 14–19 (DHGKST) and 131–134 (NKID) each bind GTP.

It belongs to the TRAFAC class translation factor GTPase superfamily. Classic translation factor GTPase family. LepA subfamily.

It localises to the cell inner membrane. The catalysed reaction is GTP + H2O = GDP + phosphate + H(+). In terms of biological role, required for accurate and efficient protein synthesis under certain stress conditions. May act as a fidelity factor of the translation reaction, by catalyzing a one-codon backward translocation of tRNAs on improperly translocated ribosomes. Back-translocation proceeds from a post-translocation (POST) complex to a pre-translocation (PRE) complex, thus giving elongation factor G a second chance to translocate the tRNAs correctly. Binds to ribosomes in a GTP-dependent manner. The chain is Elongation factor 4 from Dechloromonas aromatica (strain RCB).